The following is a 460-amino-acid chain: UDP-N-acetylmuramate--L-alanine ligase (460 aa).

An ATP-binding site is contributed by 112 to 118 (GTHGKTT).

The protein belongs to the MurCDEF family.

It localises to the cytoplasm. The catalysed reaction is UDP-N-acetyl-alpha-D-muramate + L-alanine + ATP = UDP-N-acetyl-alpha-D-muramoyl-L-alanine + ADP + phosphate + H(+). It functions in the pathway cell wall biogenesis; peptidoglycan biosynthesis. Cell wall formation. This is UDP-N-acetylmuramate--L-alanine ligase from Pelobacter propionicus (strain DSM 2379 / NBRC 103807 / OttBd1).